We begin with the raw amino-acid sequence, 274 residues long: NH(3)-dependent NAD(+) synthetase (274 aa).

G46–S53 contributes to the ATP binding site. Residue D52 coordinates Mg(2+). R140 is a deamido-NAD(+) binding site. Residue T160 coordinates ATP. E165 is a binding site for Mg(2+). Residues K173 and D180 each contribute to the deamido-NAD(+) site. Positions 189 and 211 each coordinate ATP. H260–K261 provides a ligand contact to deamido-NAD(+).

Belongs to the NAD synthetase family. As to quaternary structure, homodimer.

The enzyme catalyses deamido-NAD(+) + NH4(+) + ATP = AMP + diphosphate + NAD(+) + H(+). The protein operates within cofactor biosynthesis; NAD(+) biosynthesis; NAD(+) from deamido-NAD(+) (ammonia route): step 1/1. In terms of biological role, catalyzes the ATP-dependent amidation of deamido-NAD to form NAD. Uses ammonia as a nitrogen source. In Pectobacterium carotovorum subsp. carotovorum (strain PC1), this protein is NH(3)-dependent NAD(+) synthetase.